Reading from the N-terminus, the 278-residue chain is Large ribosomal subunit protein uL2 (278 aa).

The segment at 212 to 278 (NRHRGIRPQT…IISRKKHKKG (67 aa)) is disordered. The span at 257 to 278 (YKTRKKKASDKLIISRKKHKKG) shows a compositional bias: basic residues.

Belongs to the universal ribosomal protein uL2 family. As to quaternary structure, part of the 50S ribosomal subunit. Forms a bridge to the 30S subunit in the 70S ribosome.

Its function is as follows. One of the primary rRNA binding proteins. Required for association of the 30S and 50S subunits to form the 70S ribosome, for tRNA binding and peptide bond formation. It has been suggested to have peptidyltransferase activity; this is somewhat controversial. Makes several contacts with the 16S rRNA in the 70S ribosome. This chain is Large ribosomal subunit protein uL2, found in Helicobacter pylori (strain Shi470).